A 76-amino-acid polypeptide reads, in one-letter code: MTKRSNLDSNHIIYRSEELLGAASNRYNITVRVAKRAKENRSEDFDSIDDPNMKPAIRAIIEMSDELTRPEIISDN.

This sequence belongs to the RNA polymerase subunit omega family. In terms of assembly, in cyanobacteria the RNAP catalytic core is composed of 2 alpha, 1 beta, 1 beta', 1 gamma and 1 omega subunit. When a sigma factor is associated with the core the holoenzyme is formed, which can initiate transcription.

The catalysed reaction is RNA(n) + a ribonucleoside 5'-triphosphate = RNA(n+1) + diphosphate. Its function is as follows. Promotes RNA polymerase assembly. Latches the N- and C-terminal regions of the beta' subunit thereby facilitating its interaction with the beta and alpha subunits. This is DNA-directed RNA polymerase subunit omega (rpoZ) from Synechocystis sp. (strain ATCC 27184 / PCC 6803 / Kazusa).